The primary structure comprises 570 residues: MASLVYGTPWLRVRSLPELAPAFLRRRQSSLFYCSRRSFAVVACSTPVNNGGSVRVRFAPSPTGNLHVGGARTALFNYLFARSKGGKFVLRIEDTDLERSTRESEAAVLQDLSWLGLDWDEGPGVSGDFGPYRQSERNALYKQYAEKLLESGHVYRCFCSSEELVKMKENAKLKQLPPVYTGKWATASDAEIEQELEKGTPFTYRFRVPKEGSLKINDLIRGEVCWNLDTLGDFVVMRSNGQPVYNFCVTVDDATMAISHVIRAEEHLPNTLRQALIYKALKFPMPQFAHVSLILAPDRSKLSKRHGATSVGQYREMGYLPQGMVNYLALLGWGDGTENEFFTLEDLVEKFSIERVNKSGAIFDSTKLRWMNGQHLRALPNEKLTKLVGERWKSAGILTESEGSFVNEAVELLKDGIELVTDSDKVLLNLLSYPLHATLASPEAKPAVEDKLHEVAASLIAAYDSGEIPSALEEGQGAWQKWVKAFGKSLKRKGKSLFMPLRVLLTGKLHGPEMGTSIVLIYKAGSPGIVVPQAGFVSMEERFKILREIDWEALNKDESVPLESTATVST.

Residues 1-39 constitute a chloroplast and mitochondrion transit peptide; sequence MASLVYGTPWLRVRSLPELAPAFLRRRQSSLFYCSRRSF. 57-59 lines the L-glutamate pocket; that stretch reads RFA. Positions 60–70 match the 'HIGH' region motif; that stretch reads PSPTGNLHVGG. Residue His67 coordinates ATP. L-glutamate-binding positions include Glu93, 245 to 249, and Arg263; that span reads YNFCV. ATP-binding positions include Glu266 and 301–305; that span reads KLSKR. The 'KMSKS' region motif lies at 301–305; that stretch reads KLSKR.

The protein belongs to the class-I aminoacyl-tRNA synthetase family. Glutamate--tRNA ligase type 1 subfamily.

Its subcellular location is the plastid. It localises to the chloroplast. The protein localises to the mitochondrion. The catalysed reaction is tRNA(Glu) + L-glutamate + ATP = L-glutamyl-tRNA(Glu) + AMP + diphosphate. In terms of biological role, catalyzes the attachment of glutamate to tRNA(Glu) in a two-step reaction: glutamate is first activated by ATP to form Glu-AMP and then transferred to the acceptor end of tRNA(Glu). This Arabidopsis thaliana (Mouse-ear cress) protein is Glutamate--tRNA ligase, chloroplastic/mitochondrial.